A 391-amino-acid chain; its full sequence is Somatostatin receptor type 1 (391 aa).

A disordered region spans residues 1 to 50 (MFPNGTAPSPTSSPSSSPGGCGEGVCSRGPGSGAADGMEEPGRNSSQNGT). The Extracellular segment spans residues 1 to 56 (MFPNGTAPSPTSSPSSSPGGCGEGVCSRGPGSGAADGMEEPGRNSSQNGTLSEGQG). Asn-4 is a glycosylation site (N-linked (GlcNAc...) asparagine). The segment covering 8–18 (PSPTSSPSSSP) has biased composition (low complexity). N-linked (GlcNAc...) asparagine glycans are attached at residues Asn-44 and Asn-48. The helical transmembrane segment at 57 to 84 (SAILISFIYSVVCLVGLCGNSMVIYVIL) threads the bilayer. Over 85–94 (RYAKMKTATN) the chain is Cytoplasmic. A helical membrane pass occupies residues 95–120 (IYILNLAIADELLMLSVPFLVTSTLL). The Extracellular segment spans residues 121-131 (RHWPFGALLCR). Residues Cys-130 and Cys-208 are joined by a disulfide bond. Residues 132–153 (LVLSVDAVNMFTSIYCLTVLSV) form a helical membrane-spanning segment. The Cytoplasmic segment spans residues 154–175 (DRYVAVVHPIKAARYRRPTVAK). The chain crosses the membrane as a helical span at residues 176–196 (VVNLGVWVLSLLVILPIVVFS). At 197-219 (RTAANSDGTVACNMLMPEPAQRW) the chain is on the extracellular side. The chain crosses the membrane as a helical span at residues 220–244 (LVGFVLYTFLMGFLLPVGAICLCYV). The Cytoplasmic segment spans residues 245–270 (LIIAKMRMVALKAGWQQRKRSERKIT). The chain crosses the membrane as a helical span at residues 271–296 (LMVMMVVMVFVICWMPFYVVQLVNVF). Topologically, residues 297-303 (AEQDDAT) are extracellular. The chain crosses the membrane as a helical span at residues 304 to 327 (VSQLSVILGYANSCANPILYGFLS). Residues 328–391 (DNFKRSFQRI…GTCASRISTL (64 aa)) are Cytoplasmic-facing. Cys-339 carries the S-palmitoyl cysteine lipid modification.

It belongs to the G-protein coupled receptor 1 family. Brain, pituitary, islet, jejunum, stomach, heart, spleen.

The protein resides in the cell membrane. Receptor for somatostatin with higher affinity for somatostatin-14 than -28. This receptor is coupled to phosphotyrosine phosphatase and Na(+)/H(+) exchanger via pertussis toxin insensitive G proteins. The polypeptide is Somatostatin receptor type 1 (Sstr1) (Rattus norvegicus (Rat)).